We begin with the raw amino-acid sequence, 370 residues long: uncharacterized protein (370 aa).

The N-terminal stretch at 1–27 is a signal peptide; that stretch reads MSSAANEGCVYLFIVVLRLSSFSCVNS. Asparagine 59, asparagine 98, and asparagine 126 each carry an N-linked (GlcNAc...) asparagine glycan. Disordered regions lie at residues 81 to 101 and 123 to 167; these read SRSHTKKADTRGTADGKNTTA and LSEN…CHQP. Over residues 139 to 148 the composition is skewed to acidic residues; that stretch reads HDDDDDDDLE. Asparagine 171, asparagine 221, asparagine 230, and asparagine 262 each carry an N-linked (GlcNAc...) asparagine glycan.

This is an uncharacterized protein from Saccharomyces cerevisiae (strain ATCC 204508 / S288c) (Baker's yeast).